A 219-amino-acid polypeptide reads, in one-letter code: Pollen-specific protein SF3 (219 aa).

LIM zinc-binding domains follow at residues 9 to 109 (QKCT…TRDK) and 110 to 167 (CNAC…QLFK). The segment at 181–219 (VAAPAESETQNTETQNAETQNADTQNADTQNTETQNGSV) is disordered. A compositionally biased stretch (low complexity) spans 185–202 (AESETQNTETQNAETQNA). Over residues 203-219 (DTQNADTQNTETQNGSV) the composition is skewed to polar residues.

Pollen.

Could possibly involved in controlling pollen-specific processes such as male gamete maturation, pollen tube formation, or even fertilization. The chain is Pollen-specific protein SF3 (SF3) from Helianthus annuus (Common sunflower).